The primary structure comprises 147 residues: Methylglyoxal synthase (147 aa).

The MGS-like domain occupies 1–147 (MKGQRNIGMV…TPYVKRLGAK (147 aa)). Substrate is bound by residues H12, K16, 38–41 (TGTT), and 59–60 (SG). Catalysis depends on D65, which acts as the Proton donor/acceptor. A substrate-binding site is contributed by H92.

Belongs to the methylglyoxal synthase family.

It catalyses the reaction dihydroxyacetone phosphate = methylglyoxal + phosphate. Functionally, catalyzes the formation of methylglyoxal from dihydroxyacetone phosphate. In Oleidesulfovibrio alaskensis (strain ATCC BAA-1058 / DSM 17464 / G20) (Desulfovibrio alaskensis), this protein is Methylglyoxal synthase.